An 815-amino-acid polypeptide reads, in one-letter code: MKPEPKVATVEFTGGKSLSFETGKLAKQAHGSAIVRSGQSVVLATACANADPREGIDFFPLTVDYREYTYAGGRFPGGFIKREGRPSEKEILTSRQIDRPIRPLFPEGFRCETQVIAMVLSADSENDPDVCGINGASAALAVSDIPFNGPIGAVRVGLIEGQNIVNPTYDEMRASKLNIMVVGTAEGIVMIESGAHEATEEEVVSAIEFGHGEIKKICAVISKLAKEVGKTKRTVAPVELDQPYLDGLRKKIGADLADALNTEKYPKSESYAKVKEIKSKLKEEIPADDDAALKKLGKYYELLREDIFRQQVTKEKRRPDGRAFDQIRQIWIEVDVLPRTHGSAVFTRGETQALVTTTLGTGDDMQRMEGFEGEAKKRFMLHYNFPPFSVGEVAFLRGAGRREIGHGALAERALSAVLPSEDKWPYAMRVVSDILESNGSSSMASICGGSLSLMDAGVPLKAPVAGIAMGLVKEGDDYAILTDIAGAEDHYGDMDFKVAGTTQGITALQMDIKIGGITAQIMREALEQARRGRLFILDKMNEVIQSPRTELSEFAPRFYTLQIPTDKIRDLIGPGGKVIRGIVEATGVKIDVEDSGKVNVASSDQEAAKKALKMIGDITATAEVGKTYLGTVTRLADFGAFVEILPGTDGLLHISEVAEHRIKDVKDELHEGDQVLVKVLAVDGNRIKLSRKAVLKEQRAKMATEGGGDGGPAPEVEHSEHGAPGGVTFEGGYEGGDEPEVEEGEPNFNRDDAPGSHGATQPHSGGDRPDRGPRPHGGGGGAGRGGRGRRPGGGGGGGRGGHGGRGGGGGGRGRG.

2 residues coordinate Mg(2+): D489 and D495. Residues 556–615 (PRFYTLQIPTDKIRDLIGPGGKVIRGIVEATGVKIDVEDSGKVNVASSDQEAAKKALKMI) enclose the KH domain. Residues 625 to 692 (GKTYLGTVTR…DGNRIKLSRK (68 aa)) form the S1 motif domain. The segment at 700-815 (AKMATEGGGD…GGGGGGRGRG (116 aa)) is disordered. Gly residues predominate over residues 723–734 (APGGVTFEGGYE). The span at 735 to 745 (GGDEPEVEEGE) shows a compositional bias: acidic residues. Positions 775-815 (PHGGGGGAGRGGRGRRPGGGGGGGRGGHGGRGGGGGGRGRG) are enriched in gly residues.

The protein belongs to the polyribonucleotide nucleotidyltransferase family. Mg(2+) serves as cofactor.

The protein resides in the cytoplasm. It catalyses the reaction RNA(n+1) + phosphate = RNA(n) + a ribonucleoside 5'-diphosphate. In terms of biological role, involved in mRNA degradation. Catalyzes the phosphorolysis of single-stranded polyribonucleotides processively in the 3'- to 5'-direction. In Koribacter versatilis (strain Ellin345), this protein is Polyribonucleotide nucleotidyltransferase.